A 216-amino-acid chain; its full sequence is FGFR1 oncogene partner 2 homolog (216 aa).

Coiled coils occupy residues 33–102 (TTTL…LIMS) and 131–185 (SKEL…ITRA). The segment at 193-216 (EDAAESSSHSASSVPNTDLSLRKS) is disordered. A compositionally biased stretch (polar residues) spans 206–216 (VPNTDLSLRKS).

Belongs to the SIKE family.

The protein resides in the cytoplasm. The protein is FGFR1 oncogene partner 2 homolog (fgfr1op2) of Xenopus tropicalis (Western clawed frog).